The primary structure comprises 226 residues: Pathogenesis-related protein R minor form (226 aa).

Residues 1–25 (MNFLKSFPFYAFLCFGQYFVAVTHA) form the signal peptide. Disulfide bonds link C34–C225, C75–C85, C90–C96, C140–C214, C145–C197, C153–C163, C167–C176, and C177–C184.

The protein belongs to the thaumatin family.

The protein localises to the vacuole. The chain is Pathogenesis-related protein R minor form from Nicotiana tabacum (Common tobacco).